Here is a 579-residue protein sequence, read N- to C-terminus: Mitochondrial distribution and morphology protein 36 (579 aa).

The tract at residues 1–27 (MDENGTVKPGYELKGLNSGNSRSNMDK) is disordered. Residue S42 is modified to Phosphoserine. Disordered regions lie at residues 378–401 (TPINSSDSDNLSNGEIDRLDGRRL) and 446–518 (DNKH…ESQS). Residues 379–390 (PINSSDSDNLSN) are compositionally biased toward polar residues. Basic and acidic residues predominate over residues 446-463 (DNKHSTKDTDSNIRRNEH). Positions 495-518 (PSQSSSRMSTLPLSPSSSLLESQS) are enriched in low complexity.

In terms of biological role, involved in mitochondrial distribution and morphology. The protein is Mitochondrial distribution and morphology protein 36 (MDM36) of Saccharomyces cerevisiae (strain ATCC 204508 / S288c) (Baker's yeast).